The primary structure comprises 204 residues: Quinol oxidase subunit 3 (204 aa).

Helical transmembrane passes span 27–47 (FWIFLGAEIVLFSTLFATFFV), 66–86 (LVMIMTFLLLISSFTCGIAVH), 95–115 (GVVIWTIITLLLGAGFVGCEI), 118–138 (FVHYVHEGAALSTSAFWSGFF), 140–160 (LLGTHGTHVTIGIFWITGILI), and 184–204 (FLDVVWIFIFTGVYLMGLGGL).

The protein belongs to the cytochrome c oxidase subunit 3 family.

It localises to the cell membrane. It carries out the reaction 2 a quinol + O2 = 2 a quinone + 2 H2O. Catalyzes quinol oxidation with the concomitant reduction of oxygen to water. Major component for energy conversion during vegetative growth. In Bacillus subtilis (strain 168), this protein is Quinol oxidase subunit 3 (qoxC).